A 371-amino-acid chain; its full sequence is MSEISLIMLAAGNSTRFNTKVKKQFLRLGNDPLWLYATKNLSSFYPFKKIVVTSSNIAYMKKFTKNYEFIEGGDTRAESLKKALELIDSEFVMVSDVARVLVSKNLFDRLIENLDKADCITPALKVADTTLFDNEALQREKIKLIQTPQISKTKLLKKALDQNLEFTDDSTAIAAMGGKIWFVEGEENARKLTFKEDLKKLDLPKPSFEIFTGNGFDVHEFGENRPLLLAGVQIHPTMGLKAHSDGDVLAHSLTDAILGAAVLGDIGELYPDTDMKFKNANSMELLKQAYDKVREVGFELINIDICVMAQSPKLKDFKQAMQSNIAHTLDLDEFRINVKATTTEKLGFIGRKEGMAVLSSVNLKYFDWTRL.

The tract at residues 1–210 is 2-C-methyl-D-erythritol 4-phosphate cytidylyltransferase; it reads MSEISLIMLA…LDLPKPSFEI (210 aa). The tract at residues 211–371 is 2-C-methyl-D-erythritol 2,4-cyclodiphosphate synthase; it reads FTGNGFDVHE…NLKYFDWTRL (161 aa). The a divalent metal cation site is built by Asp217 and His219. 4-CDP-2-C-methyl-D-erythritol 2-phosphate-binding positions include 217–219 and 243–244; these read DVH and HS. His251 is a binding site for a divalent metal cation. 4-CDP-2-C-methyl-D-erythritol 2-phosphate-binding positions include 265–267, 270–274, 341–344, Phe348, and Arg351; these read DIG, YPDTD, and TTTE.

In the N-terminal section; belongs to the IspD/TarI cytidylyltransferase family. IspD subfamily. It in the C-terminal section; belongs to the IspF family. It depends on a divalent metal cation as a cofactor.

It catalyses the reaction 2-C-methyl-D-erythritol 4-phosphate + CTP + H(+) = 4-CDP-2-C-methyl-D-erythritol + diphosphate. The enzyme catalyses 4-CDP-2-C-methyl-D-erythritol 2-phosphate = 2-C-methyl-D-erythritol 2,4-cyclic diphosphate + CMP. The protein operates within isoprenoid biosynthesis; isopentenyl diphosphate biosynthesis via DXP pathway; isopentenyl diphosphate from 1-deoxy-D-xylulose 5-phosphate: step 2/6. It participates in isoprenoid biosynthesis; isopentenyl diphosphate biosynthesis via DXP pathway; isopentenyl diphosphate from 1-deoxy-D-xylulose 5-phosphate: step 4/6. Bifunctional enzyme that catalyzes the formation of 4-diphosphocytidyl-2-C-methyl-D-erythritol from CTP and 2-C-methyl-D-erythritol 4-phosphate (MEP) (IspD), and catalyzes the conversion of 4-diphosphocytidyl-2-C-methyl-D-erythritol 2-phosphate (CDP-ME2P) to 2-C-methyl-D-erythritol 2,4-cyclodiphosphate (ME-CPP) with a corresponding release of cytidine 5-monophosphate (CMP) (IspF). The polypeptide is Bifunctional enzyme IspD/IspF (Campylobacter jejuni subsp. doylei (strain ATCC BAA-1458 / RM4099 / 269.97)).